The primary structure comprises 466 residues: Acetylornithine aminotransferase, mitochondrial (466 aa).

Position 308 is an N6-(pyridoxal phosphate)lysine (Lys308).

Belongs to the class-III pyridoxal-phosphate-dependent aminotransferase family. Pyridoxal 5'-phosphate is required as a cofactor.

It localises to the mitochondrion matrix. The catalysed reaction is N(2)-acetyl-L-ornithine + 2-oxoglutarate = N-acetyl-L-glutamate 5-semialdehyde + L-glutamate. The protein operates within amino-acid biosynthesis; L-arginine biosynthesis; N(2)-acetyl-L-ornithine from L-glutamate: step 4/4. This chain is Acetylornithine aminotransferase, mitochondrial (ARG8), found in Debaryomyces hansenii (strain ATCC 36239 / CBS 767 / BCRC 21394 / JCM 1990 / NBRC 0083 / IGC 2968) (Yeast).